The chain runs to 59 residues: Large ribosomal subunit protein uL30 (59 aa).

The protein belongs to the universal ribosomal protein uL30 family. In terms of assembly, part of the 50S ribosomal subunit.

In Buchnera aphidicola subsp. Acyrthosiphon pisum (strain 5A), this protein is Large ribosomal subunit protein uL30.